Consider the following 687-residue polypeptide: Epithelial splicing regulatory protein 1 (687 aa).

3 consecutive RRM domains span residues Thr226–Gly303, Val327–Ala407, and Asp446–Ala526.

It belongs to the ESRP family.

It is found in the nucleus. Its function is as follows. mRNA splicing factor that regulates the formation of epithelial cell-specific isoforms. Specifically regulates the expression of FGFR2-IIIb, an epithelial cell-specific isoform of fgfr2. Acts by directly binding specific sequences in mRNAs. Binds the GU-rich sequence motifs in the ISE/ISS-3, a cis-element regulatory region present in the mRNA of fgfr2. The protein is Epithelial splicing regulatory protein 1 (esrp1) of Xenopus tropicalis (Western clawed frog).